The following is a 284-amino-acid chain: 2-dehydro-3-deoxyphosphooctonate aldolase (284 aa).

It belongs to the KdsA family.

It is found in the cytoplasm. It catalyses the reaction D-arabinose 5-phosphate + phosphoenolpyruvate + H2O = 3-deoxy-alpha-D-manno-2-octulosonate-8-phosphate + phosphate. The protein operates within carbohydrate biosynthesis; 3-deoxy-D-manno-octulosonate biosynthesis; 3-deoxy-D-manno-octulosonate from D-ribulose 5-phosphate: step 2/3. It participates in bacterial outer membrane biogenesis; lipopolysaccharide biosynthesis. The chain is 2-dehydro-3-deoxyphosphooctonate aldolase from Histophilus somni (strain 2336) (Haemophilus somnus).